Here is a 277-residue protein sequence, read N- to C-terminus: MARSSIEQLTSFLRSVNGRAKKALSQNFLVDGNILRKILTTAEVQPGDWVLEIGPGFGALSEVLLSQGANVIALEKDPMFEESLSQLPMDIEITDACKYPLTSLEDKGWKGKGRIVANLPYHITTPLLTKFFLECPYRWKTVTVMIQDEVARRITAKPGDKDYGSLTVFLSFFADVQYAFKVSPNCFYPKPSVHSAVVHMRVHEQFALADSEIEEFFTLTRAAFGQRRKLLANSLKNLYPKDKVFQVLEQLGFSEKTRPETIFLEEYLKIFHLLKDI.

S-adenosyl-L-methionine-binding residues include asparagine 27, leucine 29, glycine 54, glutamate 75, aspartate 95, and asparagine 118.

The protein belongs to the class I-like SAM-binding methyltransferase superfamily. rRNA adenine N(6)-methyltransferase family. RsmA subfamily.

It is found in the cytoplasm. It catalyses the reaction adenosine(1518)/adenosine(1519) in 16S rRNA + 4 S-adenosyl-L-methionine = N(6)-dimethyladenosine(1518)/N(6)-dimethyladenosine(1519) in 16S rRNA + 4 S-adenosyl-L-homocysteine + 4 H(+). Functionally, specifically dimethylates two adjacent adenosines (A1518 and A1519) in the loop of a conserved hairpin near the 3'-end of 16S rRNA in the 30S particle. May play a critical role in biogenesis of 30S subunits. This Chlamydia trachomatis serovar L2 (strain ATCC VR-902B / DSM 19102 / 434/Bu) protein is Ribosomal RNA small subunit methyltransferase A.